Here is a 608-residue protein sequence, read N- to C-terminus: Glutamine--fructose-6-phosphate aminotransferase [isomerizing] (608 aa).

Cys-2 (nucleophile; for GATase activity) is an active-site residue. Residues 2 to 217 (CGIVGIVGNQ…DGDWAVIGKT (216 aa)) form the Glutamine amidotransferase type-2 domain. 2 consecutive SIS domains span residues 281–422 (ISDA…ARGT) and 456–598 (LSRE…VDQP). Catalysis depends on Lys-603, which acts as the For Fru-6P isomerization activity.

It localises to the cytoplasm. The enzyme catalyses D-fructose 6-phosphate + L-glutamine = D-glucosamine 6-phosphate + L-glutamate. Its function is as follows. Involved in the production of the root hair deformation (HAD) factor specifically on medicago. The polypeptide is Glutamine--fructose-6-phosphate aminotransferase [isomerizing] (nodM) (Rhizobium meliloti (strain 1021) (Ensifer meliloti)).